The sequence spans 441 residues: tRNA modification GTPase MnmE (441 aa).

Positions 24, 81, and 121 each coordinate (6S)-5-formyl-5,6,7,8-tetrahydrofolate. A TrmE-type G domain is found at 218-366; sequence GMVVAIAGPP…LLRELTRFAA (149 aa). Residues 228 to 233, 247 to 253, and 272 to 275 contribute to the GTP site; these read NVGKST, SPHAGTT, and DTAG. 2 residues coordinate Mg(2+): Ser232 and Thr253. Lys441 is a binding site for (6S)-5-formyl-5,6,7,8-tetrahydrofolate.

This sequence belongs to the TRAFAC class TrmE-Era-EngA-EngB-Septin-like GTPase superfamily. TrmE GTPase family. Homodimer. Heterotetramer of two MnmE and two MnmG subunits. The cofactor is K(+).

The protein localises to the cytoplasm. In terms of biological role, exhibits a very high intrinsic GTPase hydrolysis rate. Involved in the addition of a carboxymethylaminomethyl (cmnm) group at the wobble position (U34) of certain tRNAs, forming tRNA-cmnm(5)s(2)U34. The polypeptide is tRNA modification GTPase MnmE (Rhodopseudomonas palustris (strain ATCC BAA-98 / CGA009)).